Consider the following 459-residue polypeptide: Phosphomethylpyrimidine synthase (459 aa).

Substrate is bound by residues Asn80, Met109, Tyr139, His175, 195 to 197 (SRG), 236 to 239 (DSLR), and Glu275. A Zn(2+)-binding site is contributed by His279. Tyr302 serves as a coordination point for substrate. Zn(2+) is bound at residue His343. [4Fe-4S] cluster contacts are provided by Cys423, Cys426, and Cys431.

This sequence belongs to the ThiC family. [4Fe-4S] cluster serves as cofactor.

The catalysed reaction is 5-amino-1-(5-phospho-beta-D-ribosyl)imidazole + S-adenosyl-L-methionine = 4-amino-2-methyl-5-(phosphooxymethyl)pyrimidine + CO + 5'-deoxyadenosine + formate + L-methionine + 3 H(+). The protein operates within cofactor biosynthesis; thiamine diphosphate biosynthesis. Catalyzes the synthesis of the hydroxymethylpyrimidine phosphate (HMP-P) moiety of thiamine from aminoimidazole ribotide (AIR) in a radical S-adenosyl-L-methionine (SAM)-dependent reaction. The polypeptide is Phosphomethylpyrimidine synthase (Prochlorococcus marinus (strain MIT 9303)).